The primary structure comprises 2763 residues: Large tegument protein deneddylase (2763 aa).

A deubiquitination activity region spans residues 1–247 (MDIIPPIAVT…CDTYFTDEQY (247 aa)). The Peptidase C76 domain occupies 12 to 237 (AGVGSRNQFD…SSAVTLIYGS (226 aa)). Catalysis depends on residues C32, D168, and H170. Residues 495–523 (LELFINLTILRLTGFVVENGTRTHHGATS) form an interaction with inner tegument protein region. 8 consecutive repeat copies span residues 2455–2457 (PVQ), 2458–2460 (PVQ), 2461–2463 (PAQ), 2464–2466 (PVQ), 2467–2469 (PAQ), 2470–2472 (PAQ), 2473–2475 (PVQ), and 2476–2478 (PAQ). The 8 X 3 AA repeats of P-A/V-Q stretch occupies residues 2455–2478 (PVQPVQPAQPVQPAQPAQPVQPAQ). Positions 2630-2651 (NYKTRQPSPNFPRDVHTWGVSS) are disordered.

This sequence belongs to the herpesviridae large tegument protein family. As to quaternary structure, interacts with host CUL1 and CUL4A; these interactions inhibit the E3 ligase activity of cullins. Interacts with inner tegument protein. Interacts with capsid vertex specific component CVC2. Interacts with the major capsid protein/MCP.

It localises to the virion tegument. The protein localises to the host cytoplasm. The protein resides in the host nucleus. It carries out the reaction Thiol-dependent hydrolysis of ester, thioester, amide, peptide and isopeptide bonds formed by the C-terminal Gly of ubiquitin (a 76-residue protein attached to proteins as an intracellular targeting signal).. In terms of biological role, large tegument protein that plays multiple roles in the viral cycle. During viral entry, remains associated with the capsid while most of the tegument is detached and participates in the capsid transport toward the host nucleus. Plays a role in the routing of the capsid at the nuclear pore complex and subsequent uncoating. Within the host nucleus, acts as a deneddylase and promotes the degradation of nuclear CRLs (cullin-RING ubiquitin ligases) and thereby stabilizes nuclear CRL substrates, while cytoplasmic CRLs remain unaffected. These modifications prevent host cell cycle S-phase progression and create a favorable environment allowing efficient viral genome replication. Participates later in the secondary envelopment of capsids. Indeed, plays a linker role for the association of the outer viral tegument to the capsids together with the inner tegument protein. This Varicella-zoster virus (strain Oka vaccine) (HHV-3) protein is Large tegument protein deneddylase.